A 796-amino-acid polypeptide reads, in one-letter code: MQSLSSSAPTPEAILEWLQKEMGYRQLGPYNGSSKSHVPSIDAIRKICRGNMIPIWNFLINRVKSEKTVERIRRNITVHGGSSNASIGSSVNPGKEESKSKGRRKDKTVTGESSSYAEDREAALQERELAAKEVERLRNIVRRQRKDLKARMLEVSREEAERKRMLDERANYRHKQALLEAYDQQCDEATRIFAEYHKRLQVYVNQANDAQRSVNSSNEVLSSLSANSEREAVYSTVKGTKSADDVILMETTRERNIRIVCDLLASRMIERIRNSFPAYEGNGICSLPELETAKLGFEYDGEITDEMKTVIVNSLRGPPLLLQAIAAYTLRIKTLISREMEKIDVRADAEMLRYKFENNRVTDNSSSDVSSPLSYQFNGNGKIGTDTHFQGSNNQLLERQKAHVQQFLATEDALNKAAEARDLCHKFINRLHGSADTATHSFVGGTTQSGSNLRQFELDVWGKEREAAGLRASLNTLLSEIQRLNKLCAERKEAEDSLKKKWKKIEEFDARRSELETIYTTLLKANMDAVAFWNQQPLAAREYASATVIPASEVVVDISNSAKDFIEKEVSAFFQSPDNSLYMLPATPQGLLESMGANGSTGPEAVAYAEKNAALLTARAGARDPSAIPSICRISAALQYPAGLEGSDASLASVLESLEFCLRVRGSEACVLEDLAKAIDLVHIRQDLVESGHSLLDHAFRAQQKYERTTNYCLDLASEQENTISDQWLPELRTAVQNAQASSEHCKYVRGLLDEWWEQPASTVVDWVTVDGQSVAAWQNHVKQLLAFYDKESLRT.

The disordered stretch occupies residues 79-120 (HGGSSNASIGSSVNPGKEESKSKGRRKDKTVTGESSSYAEDR). The span at 80 to 92 (GGSSNASIGSSVN) shows a compositional bias: polar residues. 2 coiled-coil regions span residues 115 to 191 (SYAE…EATR) and 462 to 501 (GKEREAAGLRASLNTLLSEIQRLNKLCAERKEAEDSLKKK).

The protein belongs to the HAUS5 family. Part of the augmin complex composed of 8 subunits. The complex acts on microtubules and interacts with gamma-tubulin in spindles and the phragmoplast.

The protein localises to the cytoplasm. The protein resides in the cytoskeleton. It is found in the spindle. Its subcellular location is the phragmoplast. Involved in microtubules reorganization during spindle and phragmoplast development. The chain is AUGMIN subunit 5 from Arabidopsis thaliana (Mouse-ear cress).